Here is a 193-residue protein sequence, read N- to C-terminus: MDLLKQKVEADGVVIDEKILKVDGFLNHQIDARLMHDVGQTFYEQFKDEGITKILTIEASGIAPAIMAAMHFDVPCLFAKKAKPSTLKKGVYQAEIHSFTKNTTSTVVVSDEFLGENDRVLIIDDFLANGDASLGLNEIVKQAKATTVGIGIVVEKSFQPGRERLEEAGLTVSSLCKVASLSGNKVTFVGDEA.

Residues Leu20 and Asn27 each coordinate xanthine. 5-phospho-alpha-D-ribose 1-diphosphate is bound at residue 128-132 (ANGDA). Xanthine is bound at residue Lys156.

The protein belongs to the purine/pyrimidine phosphoribosyltransferase family. Xpt subfamily. As to quaternary structure, homodimer.

The protein resides in the cytoplasm. The catalysed reaction is XMP + diphosphate = xanthine + 5-phospho-alpha-D-ribose 1-diphosphate. Its pathway is purine metabolism; XMP biosynthesis via salvage pathway; XMP from xanthine: step 1/1. Its function is as follows. Converts the preformed base xanthine, a product of nucleic acid breakdown, to xanthosine 5'-monophosphate (XMP), so it can be reused for RNA or DNA synthesis. This chain is Xanthine phosphoribosyltransferase, found in Staphylococcus saprophyticus subsp. saprophyticus (strain ATCC 15305 / DSM 20229 / NCIMB 8711 / NCTC 7292 / S-41).